Reading from the N-terminus, the 295-residue chain is Protease HtpX (295 aa).

Transmembrane regions (helical) follow at residues I4–L24 and Q42–S62. H147 contacts Zn(2+). Residue E148 is part of the active site. H151 provides a ligand contact to Zn(2+). A run of 2 helical transmembrane segments spans residues V158–I178 and I199–F219. Position 224 (E224) interacts with Zn(2+).

This sequence belongs to the peptidase M48B family. Requires Zn(2+) as cofactor.

The protein localises to the cell inner membrane. The polypeptide is Protease HtpX (Pseudomonas savastanoi pv. phaseolicola (strain 1448A / Race 6) (Pseudomonas syringae pv. phaseolicola (strain 1448A / Race 6))).